A 427-amino-acid chain; its full sequence is Protein TolB homolog (427 aa).

Residues 1 to 20 form the signal peptide; sequence MLRRIFVSTFLVFGIVSLYA.

Belongs to the TolB family.

It localises to the periplasm. This Chlamydia caviae (strain ATCC VR-813 / DSM 19441 / 03DC25 / GPIC) (Chlamydophila caviae) protein is Protein TolB homolog.